We begin with the raw amino-acid sequence, 410 residues long: MAEDAAEDAAAAAVEPATRPAAGPALWRLPEELLLLICSYLDTRALGRLAQVCRWLRRFTSCDLLWRPIARASLNTGFTRLGTDLMAGIPVKERVKLSQNWRLGRCRDRILLKWRYSQMPWMQLQDASLYLSQANFILAYQFRPDGASLNRRPFRVFSGHDEDVCHFVLANSHIVSAGGDGKIGVHKIHSTFTVKYSAHEQEVNCVDCKGGIIVSGSRDRTAKVWPLASGRLGQCLHTIQTEDRVWSIAISPLLSSFVTGTACCGHFSPLRIWDLNSGQLITHLGSDFPPGAGVLDVMYESPSTLLSCGYDTYVRYWDLRTSTRKCVMEWEEPHDSTFYCLQTDGNHLLATGSSYYGLVRLWDRRQRACLHAFSLTSTPLSSPVYCLRFTTRHLYAALSYNLHVLDFQNP.

The 47-residue stretch at 23–69 (GPALWRLPEELLLLICSYLDTRALGRLAQVCRWLRRFTSCDLLWRPI) folds into the F-box domain. WD repeat units lie at residues 159 to 196 (GHDE…TVKY), 198 to 235 (AHEQ…LGQC), 289 to 327 (PPGA…RKCV), and 333 to 372 (PHDS…CLHA).

Part of a SCF (SKP1-cullin-F-box) protein ligase complex. Interacts with POUF51.

Probably recognizes and binds to some phosphorylated proteins and promotes their ubiquitination and degradation. Likely to be involved in key signaling pathways crucial for normal limb development. May participate in Wnt signaling. This chain is F-box/WD repeat-containing protein 4 (Fbxw4), found in Mus musculus (Mouse).